Here is a 2551-residue protein sequence, read N- to C-terminus: Probable polyketide synthase 13 (2551 aa).

The Ketosynthase family 3 (KS3) domain maps to 10 to 434 (ENDVAIIGIG…GSNCCLILSQ (425 aa)). Residues Cys176, His317, and His358 each act as for beta-ketoacyl synthase activity in the active site. Positions 621 to 654 (GIEVSFIIGHSLGEIPAAYCSGMINIDTLCYLIY) are acyl/malonyl transferase. Ser631 acts as the For acyl/malonyl transferase activity in catalysis. The segment at 928-1057 (TDNLGYLNEN…GDFQLSNHSS (130 aa)) is N-terminal hotdog fold. Residues 928-1226 (TDNLGYLNEN…CTSLTPIKES (299 aa)) form the PKS/mFAS DH domain. The Proton acceptor; for dehydratase activity role is filled by His961. The tract at residues 1076–1226 (NLTKLSRDEL…CTSLTPIKES (151 aa)) is C-terminal hotdog fold. Asp1136 acts as the Proton donor; for dehydratase activity in catalysis. Positions 2465–2542 (DCQTIIKDSF…SSIQYTINSF (78 aa)) constitute a Carrier domain. Ser2502 bears the O-(pantetheine 4'-phosphoryl)serine mark.

Requires pantetheine 4'-phosphate as cofactor.

Probable polyketide synthase. The protein is Probable polyketide synthase 13 (pks13) of Dictyostelium discoideum (Social amoeba).